A 255-amino-acid chain; its full sequence is Small ribosomal subunit protein eS4 (255 aa).

The 64-residue stretch at 44–107 (IPLLILVRDV…DEYYRMIPYP (64 aa)) folds into the S4 RNA-binding domain.

The protein belongs to the eukaryotic ribosomal protein eS4 family.

This Ignicoccus hospitalis (strain KIN4/I / DSM 18386 / JCM 14125) protein is Small ribosomal subunit protein eS4.